A 369-amino-acid chain; its full sequence is FAD-dependent monooxygenase FPY4 (369 aa).

Belongs to the aromatic-ring hydroxylase family. The cofactor is FAD.

The protein operates within secondary metabolite biosynthesis. FAD-dependent monooxygenase; part of the gene cluster that mediates the biosynthesis of the gamma-pyrones fusapyrone (FPY) and deoxyfusapyrone (dFPY). FPY is an undecaketide and thus likely synthesized by the polyketide synthase FPY1 from acetyl-CoA functioning as starter unit and the addition of 10 malonyl-CoA extender units by successive Claisen-condensations. Next to this, FPY shares some rare features: C-glycosylated 4-deoxyglucose at C-3, a gem-dimethyl group at C-13, and an alpha-beta to beta-gamma double bond shift at C-20. During FPY biosynthesis mono-C-methyl groups are transferred to the tetra-, penta-, hexa- and heptaketide, while two C-methyl groups are transferred to the nonaketide, suggesting that the CMet domain is programmed to selectively catalyze two successive C-alpha-methylation reactions of the nonaketide, while other alpha-carbons are non- or mono-methylated only. While the origin of the 4'-deoxyglucose moiety remains opaque, its transfer to C-3 is most likely mediated by the C-glycosyltransferase FPY2. Next to this, the hydroxyl group present at C-33 and discriminating between FPY and dFPY, is likely to be installed by the cytochrome P450 monooxygenase FPY7. No putative function can be predicted for the remaining genes FPY3-FPY6. The chain is FAD-dependent monooxygenase FPY4 from Fusarium mangiferae (Mango malformation disease fungus).